The following is a 101-amino-acid chain: Putative pterin-4-alpha-carbinolamine dehydratase (101 aa).

Belongs to the pterin-4-alpha-carbinolamine dehydratase family.

It carries out the reaction (4aS,6R)-4a-hydroxy-L-erythro-5,6,7,8-tetrahydrobiopterin = (6R)-L-erythro-6,7-dihydrobiopterin + H2O. This Rhizobium johnstonii (strain DSM 114642 / LMG 32736 / 3841) (Rhizobium leguminosarum bv. viciae) protein is Putative pterin-4-alpha-carbinolamine dehydratase.